The following is a 488-amino-acid chain: Probable indole-3-acetic acid-amido synthetase GH3.6 (488 aa).

The protein belongs to the IAA-amido conjugating enzyme family. As to expression, expressed in roots and callus.

In terms of biological role, may catalyze the synthesis of indole-3-acetic acid (IAA)-amino acid conjugates, providing a mechanism for the plant to cope with the presence of excess auxin. The chain is Probable indole-3-acetic acid-amido synthetase GH3.6 (GH3.6) from Oryza sativa subsp. japonica (Rice).